The sequence spans 76 residues: MSGLGIMVLTLLLLVSMATSHQDGRGKQATQRDAINVRRRRSITRTEACYEYCKEQNKTCCGISNGRPICVGGCIR.

Positions 1–20 (MSGLGIMVLTLLLLVSMATS) are cleaved as a signal peptide. Positions 21 to 45 (HQDGRGKQATQRDAINVRRRRSITR) are excised as a propeptide. 3 disulfides stabilise this stretch: cysteine 49/cysteine 61, cysteine 53/cysteine 70, and cysteine 60/cysteine 74.

This sequence belongs to the conotoxin O3 superfamily. As to expression, expressed by the venom duct.

The protein localises to the secreted. This chain is Conotoxin VnMSGL-0112, found in Conus ventricosus (Mediterranean cone).